Consider the following 115-residue polypeptide: NADH-ubiquinone oxidoreductase chain 3 (115 aa).

The next 3 membrane-spanning stretches (helical) occupy residues 3–23 (FMLTLLTNTLLALLLVTIAFW), 55–75 (FFLVAITFLLFDLEIALLLPL), and 84–104 (LEVMLTTALLLISLLAISLAY).

Belongs to the complex I subunit 3 family. As to quaternary structure, core subunit of respiratory chain NADH dehydrogenase (Complex I) which is composed of 45 different subunits. Interacts with TMEM186. Interacts with TMEM242.

The protein localises to the mitochondrion inner membrane. The enzyme catalyses a ubiquinone + NADH + 5 H(+)(in) = a ubiquinol + NAD(+) + 4 H(+)(out). Functionally, core subunit of the mitochondrial membrane respiratory chain NADH dehydrogenase (Complex I) which catalyzes electron transfer from NADH through the respiratory chain, using ubiquinone as an electron acceptor. Essential for the catalytic activity of complex I. This Rhinolophus pumilus (Horseshoe bat) protein is NADH-ubiquinone oxidoreductase chain 3.